The chain runs to 317 residues: Probable cell division protein WhiA (317 aa).

A DNA-binding region (H-T-H motif) is located at residues 281-314 (SLKELGQMLDPPVGKSGINHRLRRIEKIAEELRK).

This sequence belongs to the WhiA family.

In terms of biological role, involved in cell division and chromosome segregation. This chain is Probable cell division protein WhiA, found in Clostridium novyi (strain NT).